The following is a 218-amino-acid chain: N-(5'-phosphoribosyl)anthranilate isomerase (218 aa).

Belongs to the TrpF family.

It catalyses the reaction N-(5-phospho-beta-D-ribosyl)anthranilate = 1-(2-carboxyphenylamino)-1-deoxy-D-ribulose 5-phosphate. Its pathway is amino-acid biosynthesis; L-tryptophan biosynthesis; L-tryptophan from chorismate: step 3/5. The polypeptide is N-(5'-phosphoribosyl)anthranilate isomerase (Bacillus licheniformis (strain ATCC 14580 / DSM 13 / JCM 2505 / CCUG 7422 / NBRC 12200 / NCIMB 9375 / NCTC 10341 / NRRL NRS-1264 / Gibson 46)).